A 314-amino-acid polypeptide reads, in one-letter code: MGRVLLSASSLLLHIQVFTRRLGNEYIEQDRPPCGTSGHPGSIRPTEMKTMTFGLNDEERAKHPRESEVLNENGAARFQQRYTHMGQKMYTCVALTVVALVSTMHFGVEAWGGLFNRFSPEMLSNLGYGSHGDHISKSGLYQRPLSTSYGYSYDSLEEVIPCYERKCTLNEHCCPGSICMNVDGDVGHCVFELGQKQGELCRNDNDCETGLMCAEVAGSETRSCQVPITSNKLYNEECNVSGECDISRGLCCQLQRRHRQTPRKVCSYFKDPLVCIGPVATDQIKSIVQYTSGEKRITGQGNRIFKRSLKAPFA.

Positions 1 to 19 (MGRVLLSASSLLLHIQVFT) are cleaved as a signal peptide. The helical transmembrane segment at 90–112 (YTCVALTVVALVSTMHFGVEAWG) threads the bilayer.

The protein localises to the membrane. In Apis mellifera (Honeybee), this protein is Prohormone-3.